The primary structure comprises 61 residues: Small ribosomal subunit protein uS14B (61 aa).

Residues Cys24, Cys27, Cys40, and Cys43 each contribute to the Zn(2+) site.

The protein belongs to the universal ribosomal protein uS14 family. Zinc-binding uS14 subfamily. As to quaternary structure, part of the 30S ribosomal subunit. Contacts proteins S3 and S10. The cofactor is Zn(2+).

Its function is as follows. Binds 16S rRNA, required for the assembly of 30S particles and may also be responsible for determining the conformation of the 16S rRNA at the A site. This Staphylococcus saprophyticus subsp. saprophyticus (strain ATCC 15305 / DSM 20229 / NCIMB 8711 / NCTC 7292 / S-41) protein is Small ribosomal subunit protein uS14B.